The chain runs to 257 residues: 5'-nucleotidase SurE (257 aa).

D8, D9, S40, and N92 together coordinate a divalent metal cation.

It belongs to the SurE nucleotidase family. The cofactor is a divalent metal cation.

It localises to the cytoplasm. It carries out the reaction a ribonucleoside 5'-phosphate + H2O = a ribonucleoside + phosphate. Its function is as follows. Nucleotidase that shows phosphatase activity on nucleoside 5'-monophosphates. This Rhizobium etli (strain ATCC 51251 / DSM 11541 / JCM 21823 / NBRC 15573 / CFN 42) protein is 5'-nucleotidase SurE.